The primary structure comprises 91 residues: Acylphosphatase (91 aa).

One can recognise an Acylphosphatase-like domain in the interval 4-91 (RAMVTVKGMV…GEFDDFHIAY (88 aa)). Active-site residues include Arg-19 and Asn-37.

This sequence belongs to the acylphosphatase family.

The enzyme catalyses an acyl phosphate + H2O = a carboxylate + phosphate + H(+). In Geotalea uraniireducens (strain Rf4) (Geobacter uraniireducens), this protein is Acylphosphatase (acyP).